Here is a 163-residue protein sequence, read N- to C-terminus: IQ domain-containing protein F2 (163 aa).

IQ domains lie at 42–71 and 98–127; these read RVIA…STWI and RERA…AIYV.

This chain is IQ domain-containing protein F2 (IQCF2), found in Bos taurus (Bovine).